A 199-amino-acid chain; its full sequence is Pyridoxine/pyridoxamine 5'-phosphate oxidase (199 aa).

FMN contacts are provided by residues 44-49 (RTVLLK), 59-60 (YT), lysine 66, and glutamine 91. Lysine 49 contributes to the substrate binding site. Tyrosine 109, arginine 113, and serine 117 together coordinate substrate. FMN-binding positions include 126–127 (QS) and tryptophan 171. 177–179 (RLH) contributes to the substrate binding site. Residue arginine 181 participates in FMN binding.

It belongs to the pyridoxamine 5'-phosphate oxidase family. Homodimer. The cofactor is FMN.

The enzyme catalyses pyridoxamine 5'-phosphate + O2 + H2O = pyridoxal 5'-phosphate + H2O2 + NH4(+). It catalyses the reaction pyridoxine 5'-phosphate + O2 = pyridoxal 5'-phosphate + H2O2. It functions in the pathway cofactor metabolism; pyridoxal 5'-phosphate salvage; pyridoxal 5'-phosphate from pyridoxamine 5'-phosphate: step 1/1. It participates in cofactor metabolism; pyridoxal 5'-phosphate salvage; pyridoxal 5'-phosphate from pyridoxine 5'-phosphate: step 1/1. Functionally, catalyzes the oxidation of either pyridoxine 5'-phosphate (PNP) or pyridoxamine 5'-phosphate (PMP) into pyridoxal 5'-phosphate (PLP). The protein is Pyridoxine/pyridoxamine 5'-phosphate oxidase of Xanthomonas axonopodis pv. citri (strain 306).